An 821-amino-acid chain; its full sequence is DNA replication licensing factor MCM6 (821 aa).

An N-acetylmethionine modification is found at methionine 1. Phosphoserine occurs at positions 13, 219, and 271. A Phosphothreonine modification is found at threonine 278. One can recognise an MCM domain in the interval leucine 346–valine 553. Histidine 359, serine 399, threonine 400, alanine 401, lysine 402, serine 403, and asparagine 504 together coordinate ATP. An Arginine finger motif is present at residues serine 528–aspartate 531. 2 residues coordinate ADP: arginine 619 and glutamate 622. Lysine 643 carries the post-translational modification N6-acetyllysine. The interval threonine 676 to valine 708 is disordered. Residues serine 689, serine 704, and serine 762 each carry the phosphoserine modification. The span at phenylalanine 696–valine 708 shows a compositional bias: polar residues. Threonine 791 is subject to Phosphothreonine.

Belongs to the MCM family. In terms of assembly, component of the MCM2-7 complex. The complex forms a toroidal hexameric ring with the proposed subunit order MCM2-MCM6-MCM4-MCM7-MCM3-MCM5. Component of the CMG helicase complex, a hexameric ring of related MCM2-7 subunits stabilized by CDC45 and the tetrameric GINS complex. May interact with MCM10. Interacts with TIPIN. Interacts with CDT1. Interacts with MCMBP. Interacts with DDI2. In terms of processing, O-glycosylated (O-GlcNAcylated), in a cell cycle-dependent manner.

The protein localises to the nucleus. It is found in the chromosome. It catalyses the reaction ATP + H2O = ADP + phosphate + H(+). Functionally, acts as a component of the MCM2-7 complex (MCM complex) which is the replicative helicase essential for 'once per cell cycle' DNA replication initiation and elongation in eukaryotic cells. Core component of CDC45-MCM-GINS (CMG) helicase, the molecular machine that unwinds template DNA during replication, and around which the replisome is built. The active ATPase sites in the MCM2-7 ring are formed through the interaction surfaces of two neighboring subunits such that a critical structure of a conserved arginine finger motif is provided in trans relative to the ATP-binding site of the Walker A box of the adjacent subunit. The six ATPase active sites, however, are likely to contribute differentially to the complex helicase activity. This chain is DNA replication licensing factor MCM6 (Mcm6), found in Mus musculus (Mouse).